The chain runs to 862 residues: DNA mismatch repair protein MutS (862 aa).

603-610 (GPNMSGKS) serves as a coordination point for ATP.

Belongs to the DNA mismatch repair MutS family.

In terms of biological role, this protein is involved in the repair of mismatches in DNA. It is possible that it carries out the mismatch recognition step. This protein has a weak ATPase activity. The protein is DNA mismatch repair protein MutS of Bacillus velezensis (strain DSM 23117 / BGSC 10A6 / LMG 26770 / FZB42) (Bacillus amyloliquefaciens subsp. plantarum).